The chain runs to 297 residues: Vacuolar protein sorting-associated protein 26C (297 aa).

The protein belongs to the VPS26 family. In terms of assembly, component of the commander complex that is essential for endosomal recycling of transmembrane cargos; the commander complex is composed of the CCC subcomplex and the retriever subcomplex. Component of the heterotrimeric retriever complex consisting of VPS26C, VPS29 and VPS35L; within the complex interacts with VPS35L. Interacts with SNX17 (via C-terminus); the interaction is direct and associates SNX17 with the retriever complex. Interacts with SNX31; the interaction is direct.

It is found in the endosome. Functionally, component of the commander complex that is essential for endosomal recycling of transmembrane cargos; the commander complex is composed of the CCC subcomplex and the retriever subcomplex. Component of the retriever complex, which is a heterotrimeric complex related to retromer cargo-selective complex (CSC) and essential for retromer-independent retrieval and recycling of numerous cargos such as integrin alpha-5/beta-1 (ITGA5:ITGB1). The recruitment of the retriever complex to the endosomal membrane involves CCC and WASH complexes. In the endosomes, drives the retriever and recycling of NxxY-motif-containing cargo proteins by coupling to SNX17, a cargo essential for the homeostatic maintenance of numerous cell surface proteins associated with processes that include cell migration, cell adhesion, nutrient supply and cell signaling. In Mus musculus (Mouse), this protein is Vacuolar protein sorting-associated protein 26C.